The chain runs to 178 residues: Interleukin-10 (178 aa).

The N-terminal stretch at 1–18 (MHSSALLCCLVLLTGVRA) is a signal peptide. 2 cysteine pairs are disulfide-bonded: Cys-30–Cys-126 and Cys-80–Cys-132. Asn-134 is a glycosylation site (N-linked (GlcNAc...) asparagine).

Belongs to the IL-10 family. As to quaternary structure, homodimer. Interacts with IL10RA and IL10RB.

The protein resides in the secreted. In terms of biological role, major immune regulatory cytokine that acts on many cells of the immune system where it has profound anti-inflammatory functions, limiting excessive tissue disruption caused by inflammation. Mechanistically, IL10 binds to its heterotetrameric receptor comprising IL10RA and IL10RB leading to JAK1 and STAT2-mediated phosphorylation of STAT3. In turn, STAT3 translocates to the nucleus where it drives expression of anti-inflammatory mediators. Targets antigen-presenting cells (APCs) such as macrophages and monocytes and inhibits their release of pro-inflammatory cytokines including granulocyte-macrophage colony-stimulating factor /GM-CSF, granulocyte colony-stimulating factor/G-CSF, IL-1 alpha, IL-1 beta, IL-6, IL-8 and TNF-alpha. Also interferes with antigen presentation by reducing the expression of MHC-class II and co-stimulatory molecules, thereby inhibiting their ability to induce T cell activation. In addition, controls the inflammatory response of macrophages by reprogramming essential metabolic pathways including mTOR signaling. This chain is Interleukin-10 (IL10), found in Macaca fascicularis (Crab-eating macaque).